Consider the following 298-residue polypeptide: Tryptophan 2,3-dioxygenase (298 aa).

Substrate is bound by residues 51–55, Tyr-113, and Arg-117; that span reads FIIQH. His-240 contributes to the heme binding site. Thr-254 contributes to the substrate binding site.

It belongs to the tryptophan 2,3-dioxygenase family. As to quaternary structure, homotetramer. Requires heme as cofactor.

It carries out the reaction L-tryptophan + O2 = N-formyl-L-kynurenine. It functions in the pathway amino-acid degradation; L-tryptophan degradation via kynurenine pathway; L-kynurenine from L-tryptophan: step 1/2. In terms of biological role, heme-dependent dioxygenase that catalyzes the oxidative cleavage of the L-tryptophan (L-Trp) pyrrole ring and converts L-tryptophan to N-formyl-L-kynurenine. Catalyzes the oxidative cleavage of the indole moiety. This is Tryptophan 2,3-dioxygenase from Xanthomonas campestris pv. campestris (strain 8004).